We begin with the raw amino-acid sequence, 462 residues long: ATP synthase subunit beta (462 aa).

152–159 (GGAGVGKT) is a binding site for ATP.

Belongs to the ATPase alpha/beta chains family. As to quaternary structure, F-type ATPases have 2 components, CF(1) - the catalytic core - and CF(0) - the membrane proton channel. CF(1) has five subunits: alpha(3), beta(3), gamma(1), delta(1), epsilon(1). CF(0) has three main subunits: a(1), b(2) and c(9-12). The alpha and beta chains form an alternating ring which encloses part of the gamma chain. CF(1) is attached to CF(0) by a central stalk formed by the gamma and epsilon chains, while a peripheral stalk is formed by the delta and b chains.

The protein localises to the cell inner membrane. It catalyses the reaction ATP + H2O + 4 H(+)(in) = ADP + phosphate + 5 H(+)(out). In terms of biological role, produces ATP from ADP in the presence of a proton gradient across the membrane. The catalytic sites are hosted primarily by the beta subunits. In Blochmanniella pennsylvanica (strain BPEN), this protein is ATP synthase subunit beta.